Consider the following 184-residue polypeptide: ATP synthase subunit b, chloroplastic (184 aa).

A helical transmembrane segment spans residues 27–49; sequence LATNLINLSVVLGVLIFFGKGVL.

The protein belongs to the ATPase B chain family. In terms of assembly, F-type ATPases have 2 components, F(1) - the catalytic core - and F(0) - the membrane proton channel. F(1) has five subunits: alpha(3), beta(3), gamma(1), delta(1), epsilon(1). F(0) has four main subunits: a(1), b(1), b'(1) and c(10-14). The alpha and beta chains form an alternating ring which encloses part of the gamma chain. F(1) is attached to F(0) by a central stalk formed by the gamma and epsilon chains, while a peripheral stalk is formed by the delta, b and b' chains.

It localises to the plastid. The protein localises to the chloroplast thylakoid membrane. Its function is as follows. F(1)F(0) ATP synthase produces ATP from ADP in the presence of a proton or sodium gradient. F-type ATPases consist of two structural domains, F(1) containing the extramembraneous catalytic core and F(0) containing the membrane proton channel, linked together by a central stalk and a peripheral stalk. During catalysis, ATP synthesis in the catalytic domain of F(1) is coupled via a rotary mechanism of the central stalk subunits to proton translocation. Component of the F(0) channel, it forms part of the peripheral stalk, linking F(1) to F(0). This chain is ATP synthase subunit b, chloroplastic, found in Helianthus annuus (Common sunflower).